The chain runs to 298 residues: Thymidylate synthase (298 aa).

DUMP contacts are provided by residues Arg-25 and 159–160 (RR). Cys-179 acts as the Nucleophile in catalysis. DUMP contacts are provided by residues 200–203 (RSVD), Asn-211, and 241–243 (HLY). Asp-203 contacts (6R)-5,10-methylene-5,6,7,8-tetrahydrofolate. Ala-297 is a binding site for (6R)-5,10-methylene-5,6,7,8-tetrahydrofolate.

The protein belongs to the thymidylate synthase family. Bacterial-type ThyA subfamily. Homodimer.

The protein localises to the cytoplasm. The enzyme catalyses dUMP + (6R)-5,10-methylene-5,6,7,8-tetrahydrofolate = 7,8-dihydrofolate + dTMP. Its pathway is pyrimidine metabolism; dTTP biosynthesis. Catalyzes the reductive methylation of 2'-deoxyuridine-5'-monophosphate (dUMP) to 2'-deoxythymidine-5'-monophosphate (dTMP) while utilizing 5,10-methylenetetrahydrofolate (mTHF) as the methyl donor and reductant in the reaction, yielding dihydrofolate (DHF) as a by-product. This enzymatic reaction provides an intracellular de novo source of dTMP, an essential precursor for DNA biosynthesis. This is Thymidylate synthase from Cereibacter sphaeroides (strain ATCC 17023 / DSM 158 / JCM 6121 / CCUG 31486 / LMG 2827 / NBRC 12203 / NCIMB 8253 / ATH 2.4.1.) (Rhodobacter sphaeroides).